Reading from the N-terminus, the 410-residue chain is Transposase for insertion sequence element IS801 (410 aa).

Belongs to the transposase 32 family.

Functionally, involved in the transposition of the insertion sequence. This is Transposase for insertion sequence element IS801 from Pseudomonas savastanoi pv. phaseolicola (Pseudomonas syringae pv. phaseolicola).